The following is a 162-amino-acid chain: Inner membrane protein YbjO (162 aa).

Residues 1–23 (MEDETLGFFKKTSSSHARLNVPA) are Periplasmic-facing. The helical transmembrane segment at 24-44 (LVQVAALAIIMIRGLDVLMIF) threads the bilayer. The Cytoplasmic segment spans residues 45–66 (NTLGVRGIGEFIHRSVQTWSLT). A helical transmembrane segment spans residues 67-87 (LVFLSSLVLVFIEIWCAFSLV). Topologically, residues 88-94 (KGRRWAR) are periplasmic. Residues 95 to 115 (WLYLLTQITAASYLWAASLGY) traverse the membrane as a helical segment. Residues 116 to 162 (GYPELFSIPGESKREIFHSLMLQKLPDMLILMLLFVPSTSRRFFQLQ) lie on the Cytoplasmic side of the membrane.

Its subcellular location is the cell inner membrane. The sequence is that of Inner membrane protein YbjO (ybjO) from Escherichia coli O157:H7.